The chain runs to 237 residues: Ubiquinone/menaquinone biosynthesis C-methyltransferase UbiE (237 aa).

Residues Thr-60 and Asp-80 each coordinate S-adenosyl-L-methionine.

It belongs to the class I-like SAM-binding methyltransferase superfamily. MenG/UbiE family.

The catalysed reaction is a 2-demethylmenaquinol + S-adenosyl-L-methionine = a menaquinol + S-adenosyl-L-homocysteine + H(+). The enzyme catalyses a 2-methoxy-6-(all-trans-polyprenyl)benzene-1,4-diol + S-adenosyl-L-methionine = a 5-methoxy-2-methyl-3-(all-trans-polyprenyl)benzene-1,4-diol + S-adenosyl-L-homocysteine + H(+). It participates in quinol/quinone metabolism; menaquinone biosynthesis; menaquinol from 1,4-dihydroxy-2-naphthoate: step 2/2. The protein operates within cofactor biosynthesis; ubiquinone biosynthesis. Functionally, methyltransferase required for the conversion of demethylmenaquinol (DMKH2) to menaquinol (MKH2) and the conversion of 2-polyprenyl-6-methoxy-1,4-benzoquinol (DDMQH2) to 2-polyprenyl-3-methyl-6-methoxy-1,4-benzoquinol (DMQH2). In Syntrophotalea carbinolica (strain DSM 2380 / NBRC 103641 / GraBd1) (Pelobacter carbinolicus), this protein is Ubiquinone/menaquinone biosynthesis C-methyltransferase UbiE.